We begin with the raw amino-acid sequence, 468 residues long: Dihydrolipoyl dehydrogenase (468 aa).

FAD is bound by residues 39-47 (EKGNLGGVC), Lys56, and Ala119. A disulfide bond links Cys47 and Cys52. NAD(+) contacts are provided by residues 183–187 (GGGYI), Glu206, and 271–274 (TVGR). The FAD site is built by Asp314 and Ala322. His446 (proton acceptor) is an active-site residue.

Belongs to the class-I pyridine nucleotide-disulfide oxidoreductase family. As to quaternary structure, homodimer. FAD is required as a cofactor.

It localises to the cytoplasm. The protein localises to the membrane. It carries out the reaction N(6)-[(R)-dihydrolipoyl]-L-lysyl-[protein] + NAD(+) = N(6)-[(R)-lipoyl]-L-lysyl-[protein] + NADH + H(+). Lipoamide dehydrogenase is a component of the alpha-ketoacid dehydrogenase complexes. This Staphylococcus aureus (strain COL) protein is Dihydrolipoyl dehydrogenase (pdhD).